The following is a 118-amino-acid chain: Large ribosomal subunit protein uL18 (118 aa).

The tract at residues 1–25 is disordered; it reads MISKPDKNKLRQKRHRRVRGKLSGT. Basic residues predominate over residues 10-20; it reads LRQKRHRRVRG.

This sequence belongs to the universal ribosomal protein uL18 family. In terms of assembly, part of the 50S ribosomal subunit; part of the 5S rRNA/L5/L18/L25 subcomplex. Contacts the 5S and 23S rRNAs.

Functionally, this is one of the proteins that bind and probably mediate the attachment of the 5S RNA into the large ribosomal subunit, where it forms part of the central protuberance. The sequence is that of Large ribosomal subunit protein uL18 from Streptococcus pneumoniae (strain Hungary19A-6).